The primary structure comprises 859 residues: Leucine--tRNA ligase (859 aa).

The 'HIGH' region motif lies at Pro-42–His-52. Residues Lys-618 to Ser-622 carry the 'KMSKS' region motif. ATP is bound at residue Lys-621.

This sequence belongs to the class-I aminoacyl-tRNA synthetase family.

Its subcellular location is the cytoplasm. It catalyses the reaction tRNA(Leu) + L-leucine + ATP = L-leucyl-tRNA(Leu) + AMP + diphosphate. The protein is Leucine--tRNA ligase of Shewanella sp. (strain ANA-3).